A 356-amino-acid chain; its full sequence is Tyrosine recombinase XerS (356 aa).

The Core-binding (CB) domain maps to 16–121 (VMPPYVLEYY…ALSSLYKYLT (106 aa)). The Tyr recombinase domain maps to 169–354 (GFLDYIDSEY…INEEQKNALD (186 aa)). Catalysis depends on residues Arg210, Lys234, His306, Arg309, and His332. The active-site O-(3'-phospho-DNA)-tyrosine intermediate is the Tyr341.

This sequence belongs to the 'phage' integrase family. XerS subfamily.

It is found in the cytoplasm. FtsK is required for recombination. In terms of biological role, site-specific tyrosine recombinase, which acts by catalyzing the cutting and rejoining of the recombining DNA molecules. Essential to convert dimers of the bacterial chromosome into monomers to permit their segregation at cell division. The polypeptide is Tyrosine recombinase XerS (Lactococcus lactis subsp. cremoris (strain SK11)).